Reading from the N-terminus, the 472-residue chain is Methanethiol oxidase (472 aa).

Ala-2 carries the post-translational modification N-acetylalanine. Position 467 is a phosphoserine (Ser-467).

This sequence belongs to the selenium-binding protein family. In terms of assembly, interacts with USP33. Post-translationally, the N-terminus is blocked.

It is found in the nucleus. It localises to the cytoplasm. The protein localises to the cytosol. The protein resides in the membrane. The enzyme catalyses methanethiol + O2 + H2O = hydrogen sulfide + formaldehyde + H2O2 + H(+). The protein operates within organosulfur degradation. Catalyzes the oxidation of methanethiol, an organosulfur compound known to be produced in substantial amounts by gut bacteria. Selenium-binding protein which may be involved in the sensing of reactive xenobiotics in the cytoplasm. May be involved in intra-Golgi protein transport. The polypeptide is Methanethiol oxidase (SELENBP1) (Bos taurus (Bovine)).